The sequence spans 169 residues: Ribosome maturation factor RimM (169 aa).

Positions Asp94–Leu168 constitute a PRC barrel domain.

It belongs to the RimM family. In terms of assembly, binds ribosomal protein uS19.

The protein resides in the cytoplasm. An accessory protein needed during the final step in the assembly of 30S ribosomal subunit, possibly for assembly of the head region. Essential for efficient processing of 16S rRNA. May be needed both before and after RbfA during the maturation of 16S rRNA. It has affinity for free ribosomal 30S subunits but not for 70S ribosomes. The chain is Ribosome maturation factor RimM from Cereibacter sphaeroides (strain ATCC 17023 / DSM 158 / JCM 6121 / CCUG 31486 / LMG 2827 / NBRC 12203 / NCIMB 8253 / ATH 2.4.1.) (Rhodobacter sphaeroides).